A 1309-amino-acid polypeptide reads, in one-letter code: Clustered mitochondria protein homolog (1309 aa).

Positions 1–34 are disordered; the sequence is MLLNGDCPESLKKEAAAAEPPRENGLDEAGPGDE. Residues 9–25 are compositionally biased toward basic and acidic residues; it reads ESLKKEAAAAEPPRENG. Phosphoserine occurs at positions 279 and 281. Residues 335–577 enclose the Clu domain; the sequence is RAEDAYTSRL…RTFPPDLNFL (243 aa). Over residues 636-651 the composition is skewed to polar residues; sequence LETPSSLENGGPSSLE. Residues 636–674 are disordered; that stretch reads LETPSSLENGGPSSLESKSEDPPGQEAGSEEEGSSASGL. 3 positions are modified to phosphoserine: Ser654, Ser664, and Ser723. TPR repeat units follow at residues 978–1011, 1020–1053, 1104–1137, and 1146–1179; these read AFHF…FNNV, CACL…SERV, ALLD…STKY, and ALSH…YKTQ. A compositionally biased stretch (basic and acidic residues) spans 1264–1278; it reads HQLQEASRNRDRAEE. The segment at 1264-1309 is disordered; that stretch reads HQLQEASRNRDRAEEPMATEPAPAGAPGDLGSQPPAAKDPSPSVQG. Residues 1279 to 1290 show a composition bias toward low complexity; that stretch reads PMATEPAPAGAP.

The protein belongs to the CLU family.

The protein resides in the cytoplasm. The protein localises to the cytoplasmic granule. Its function is as follows. mRNA-binding protein involved in proper cytoplasmic distribution of mitochondria. Specifically binds mRNAs of nuclear-encoded mitochondrial proteins in the cytoplasm and regulates transport or translation of these transcripts close to mitochondria, playing a role in mitochondrial biogenesis. This chain is Clustered mitochondria protein homolog (CLUH), found in Homo sapiens (Human).